Reading from the N-terminus, the 278-residue chain is MALKKYKPTSPAQRGLVLVDRSALYKGKPVKDLTEGLTKSGGRNNHGRITVRFRGGGHKRSYRTVDFKRRRYDVPATVERLEYDPNRTAFIALVKYEDGELAYILAPQRLQPGDVVISGSRVDVKPGNAMPLANIPVGTIVHNVEMKPGKGGQIARSAGTYVQLVGRDQGYALLRLSSGEQRMVPATCMASIGAVSNPDHSNITIAKAGRNRWLGKRPHVRGVVMNPVDHPHGGGEGRTSGGRHPVTPWGKPTKGKKTRANKATDKYIVRSRHQKKKG.

Residues 225–278 (MNPVDHPHGGGEGRTSGGRHPVTPWGKPTKGKKTRANKATDKYIVRSRHQKKKG) form a disordered region. Over residues 269–278 (VRSRHQKKKG) the composition is skewed to basic residues.

The protein belongs to the universal ribosomal protein uL2 family. In terms of assembly, part of the 50S ribosomal subunit. Forms a bridge to the 30S subunit in the 70S ribosome.

In terms of biological role, one of the primary rRNA binding proteins. Required for association of the 30S and 50S subunits to form the 70S ribosome, for tRNA binding and peptide bond formation. It has been suggested to have peptidyltransferase activity; this is somewhat controversial. Makes several contacts with the 16S rRNA in the 70S ribosome. The chain is Large ribosomal subunit protein uL2 from Parvibaculum lavamentivorans (strain DS-1 / DSM 13023 / NCIMB 13966).